A 216-amino-acid polypeptide reads, in one-letter code: U1 small nuclear ribonucleoprotein A (216 aa).

RRM domains lie at glutamine 7–serine 86 and glutamine 142–lysine 216. Residues threonine 97–glutamine 142 form a disordered region. The segment covering serine 126 to glutamine 142 has biased composition (polar residues).

The protein belongs to the RRM U1 A/B'' family. Belongs to the spliceosome where it is associated with snRNP U1. Interacts with the SMN complex.

It is found in the nucleus. In terms of biological role, binds stem loop II of U1 snRNA. It is the first snRNP to interact with pre-mRNA. This interaction is required for the subsequent binding of U2 snRNP and the U4/U6/U5 tri-snRNP. Plays a role in regulating sex-lethal splicing. This is U1 small nuclear ribonucleoprotein A (snf) from Drosophila melanogaster (Fruit fly).